A 141-amino-acid chain; its full sequence is Large ribosomal subunit protein uL16 (141 aa).

Positions 1–20 (MLMPKRTKYRKQMKGRNRGK) are disordered.

This sequence belongs to the universal ribosomal protein uL16 family. In terms of assembly, part of the 50S ribosomal subunit.

Its function is as follows. Binds 23S rRNA and is also seen to make contacts with the A and possibly P site tRNAs. This Helicobacter hepaticus (strain ATCC 51449 / 3B1) protein is Large ribosomal subunit protein uL16.